The following is a 211-amino-acid chain: Cytochrome c biogenesis ATP-binding export protein CcmA (211 aa).

In terms of domain architecture, ABC transporter spans 8-210; it reads LEAKNLQCER…EVRRIQLGAV (203 aa). Position 40–47 (40–47) interacts with ATP; that stretch reads GPNGAGKT.

It belongs to the ABC transporter superfamily. CcmA exporter (TC 3.A.1.107) family. The complex is composed of two ATP-binding proteins (CcmA) and two transmembrane proteins (CcmB).

The protein resides in the cell inner membrane. It carries out the reaction heme b(in) + ATP + H2O = heme b(out) + ADP + phosphate + H(+). Its function is as follows. Part of the ABC transporter complex CcmAB involved in the biogenesis of c-type cytochromes; once thought to export heme, this seems not to be the case, but its exact role is uncertain. Responsible for energy coupling to the transport system. In Hahella chejuensis (strain KCTC 2396), this protein is Cytochrome c biogenesis ATP-binding export protein CcmA.